The chain runs to 353 residues: F-box protein At2g14290 (353 aa).

The F-box domain occupies 6–58 (PRTWSELPPDLLGSIFHRLSFTDFHRAKIVCWNWNLSSKLTVPKKIRSPWLML).

In Arabidopsis thaliana (Mouse-ear cress), this protein is F-box protein At2g14290.